A 95-amino-acid chain; its full sequence is Aspartyl/glutamyl-tRNA(Asn/Gln) amidotransferase subunit C (95 aa).

It belongs to the GatC family. As to quaternary structure, heterotrimer of A, B and C subunits.

The enzyme catalyses L-glutamyl-tRNA(Gln) + L-glutamine + ATP + H2O = L-glutaminyl-tRNA(Gln) + L-glutamate + ADP + phosphate + H(+). It catalyses the reaction L-aspartyl-tRNA(Asn) + L-glutamine + ATP + H2O = L-asparaginyl-tRNA(Asn) + L-glutamate + ADP + phosphate + 2 H(+). In terms of biological role, allows the formation of correctly charged Asn-tRNA(Asn) or Gln-tRNA(Gln) through the transamidation of misacylated Asp-tRNA(Asn) or Glu-tRNA(Gln) in organisms which lack either or both of asparaginyl-tRNA or glutaminyl-tRNA synthetases. The reaction takes place in the presence of glutamine and ATP through an activated phospho-Asp-tRNA(Asn) or phospho-Glu-tRNA(Gln). In Allorhizobium ampelinum (strain ATCC BAA-846 / DSM 112012 / S4) (Agrobacterium vitis (strain S4)), this protein is Aspartyl/glutamyl-tRNA(Asn/Gln) amidotransferase subunit C.